Here is a 507-residue protein sequence, read N- to C-terminus: ATP synthase subunit alpha, chloroplastic (507 aa).

Residue 170 to 177 participates in ATP binding; it reads GDRQTGKT.

It belongs to the ATPase alpha/beta chains family. F-type ATPases have 2 components, CF(1) - the catalytic core - and CF(0) - the membrane proton channel. CF(1) has five subunits: alpha(3), beta(3), gamma(1), delta(1), epsilon(1). CF(0) has four main subunits: a, b, b' and c.

It localises to the plastid. The protein resides in the chloroplast thylakoid membrane. The enzyme catalyses ATP + H2O + 4 H(+)(in) = ADP + phosphate + 5 H(+)(out). Its function is as follows. Produces ATP from ADP in the presence of a proton gradient across the membrane. The alpha chain is a regulatory subunit. This chain is ATP synthase subunit alpha, chloroplastic, found in Daucus carota (Wild carrot).